A 643-amino-acid chain; its full sequence is Complement component C1q receptor (643 aa).

The signal sequence occupies residues 1 to 23 (MVTSTGLLLLLGLLGQLWAGAAA). Residues 24-571 (DSEAVVCEGT…HSDSDTDGQK (548 aa)) are Extracellular-facing. Positions 31 to 173 (EGTACYTAHW…CGTPDAPGNS (143 aa)) constitute a C-type lectin domain. Disulfide bonds link Cys140–Cys164, Cys261–Cys272, Cys268–Cys282, Cys284–Cys297, Cys303–Cys314, Cys308–Cys325, Cys327–Cys340, Cys346–Cys355, Cys351–Cys364, Cys366–Cys380, Cys386–Cys397, Cys393–Cys406, Cys408–Cys422, Cys428–Cys437, Cys433–Cys446, and Cys448–Cys461. 2 EGF-like domains span residues 257-298 (PKFG…VTCA) and 299-341 (SRNP…VHCV). N-linked (GlcNAc...) asparagine glycosylation is present at Asn322. In terms of domain architecture, EGF-like 3; calcium-binding spans 342 to 381 (DIDECEDSPCDQECINTPGGFHCECWVGYQSSGSKEEACE). Residues 382–423 (DVDECTAAYSPCAQGCTNTDGSFYCSCKEGYIMSGEDSTQCE) form the EGF-like 4; calcium-binding domain. Residues 424–462 (DIDECLGNPCDTLCINTDGSFRCGCPAGFELAPNGVSCT) enclose the EGF-like 5; calcium-binding domain. The segment at 469–517 (ELPARPPQKEDKGDGKESTVPLTEMPGSLNGSKDVSNRAQTTDLSIQSD) is disordered. Residues 475–485 (PQKEDKGDGKE) are compositionally biased toward basic and acidic residues. The segment covering 497–517 (LNGSKDVSNRAQTTDLSIQSD) has biased composition (polar residues). N-linked (GlcNAc...) asparagine glycosylation occurs at Asn498. Residues 572–592 (LLLFYILGTVVAISLLLALAL) form a helical membrane-spanning segment. At 593–643 (GLLIYLKRKAKKEEIKEKKAQNAADSYSWIPERAESRAPENQYSPTPGTDC) the chain is on the cytoplasmic side. The segment at 606 to 643 (EIKEKKAQNAADSYSWIPERAESRAPENQYSPTPGTDC) is disordered. Ser618 is subject to Phosphoserine. 2 positions are modified to phosphotyrosine: Tyr619 and Tyr635. Positions 631 to 643 (PENQYSPTPGTDC) are enriched in polar residues.

In terms of assembly, homodimer. Interacts with C1QBP; the association may represent a cell surface C1q receptor. Interacts with surfactant protein A/SFTPA1. Interacts with multimerin-2/MMRN2. Interacts with DAG1; this interaction plays an important role in endothelial cell migration. Interacts with CBL. Interacts with IGFBP7. Interacts with VEGFR2. N- and O-glycosylated. In terms of processing, phosphorylated on Tyr-619 and Tyr-635 by SRC; these phosphorylations promote endothelial cell adhesion and migration. Widely expressed. Highly expressed in lung and heart. Expressed at lower level in brain, thymus, liver, spleen, intestine, kidney, adrenal gland, muscle and testis. Expressed on endothelial cells, platelets, undifferentiated monocytes and circulating natural killer cells.

It localises to the cell membrane. Cell surface receptor that plays a role in various physiological processes including inflammation, phagocytosis, and cell adhesion. Plays a role in phagocytosis and enhances the uptake of apoptotic cells and immune complexes by acting as a receptor for defense collagens including surfactant protein A/SFTPA1, C1q, and mannose-binding lectin (MBL2). Plays a role in the regulation of endothelial cell function and adhesion by activating angiogenesis. Mechanistically, exerts its angiogenic function by associating with beta-dystroglycan, leading to SRC-dependent phosphorylation and subsequent recruitment of CBL. In turn, CBL provides a docking site for downstream signaling components, such as CRKL to enhance cell migration. Participates in angiogenesis also by acting as a receptor for the ECM pan-endothelial glycoprotein multimerin-2/MMRN2 and IGFBP7 ligands. Both ligands play a non-redundant role in CD93-mediated endothelial cell function. Acts as a key regulator of endothelial barrier function through modulating VEGFR2 function. In Rattus norvegicus (Rat), this protein is Complement component C1q receptor (Cd93).